The sequence spans 541 residues: Apolipoprotein N-acyltransferase (541 aa).

6 helical membrane-spanning segments follow: residues 21-41 (MSWF…WYSL), 54-74 (LTSL…SWML), 89-109 (VLIS…FFIV), 116-136 (ILWC…YFLC), 157-177 (FGGF…GISF), and 189-209 (YVWL…YEYL). Residues 219–500 (LRVAVIQPAS…PGVLQVSLPM (282 aa)) form the CN hydrolase domain. Catalysis depends on Glu-265, which acts as the Proton acceptor. Lys-350 is an active-site residue. Cys-405 acts as the Nucleophile in catalysis. A helical transmembrane segment spans residues 506-526 (LYAFWGDFPMIFLSLLSIGCI).

It belongs to the CN hydrolase family. Apolipoprotein N-acyltransferase subfamily.

It is found in the cell inner membrane. The enzyme catalyses N-terminal S-1,2-diacyl-sn-glyceryl-L-cysteinyl-[lipoprotein] + a glycerophospholipid = N-acyl-S-1,2-diacyl-sn-glyceryl-L-cysteinyl-[lipoprotein] + a 2-acyl-sn-glycero-3-phospholipid + H(+). It functions in the pathway protein modification; lipoprotein biosynthesis (N-acyl transfer). Catalyzes the phospholipid dependent N-acylation of the N-terminal cysteine of apolipoprotein, the last step in lipoprotein maturation. In Chlamydia caviae (strain ATCC VR-813 / DSM 19441 / 03DC25 / GPIC) (Chlamydophila caviae), this protein is Apolipoprotein N-acyltransferase.